The sequence spans 54 residues: Snake venom 5'-nucleotidase (54 aa).

Positions 11 and 13 each coordinate Zn(2+). N46 carries an N-linked (GlcNAc...) asparagine glycan.

Belongs to the 5'-nucleotidase family. Zn(2+) serves as cofactor. In terms of processing, venom 5'-nucleotidases (or a part thereof) may be released into the venom via exosome-like vesicles. They may be attached via a GPI anchor to the membrane of these vesicles. Soluble forms of 5'-nucleotidase might be released by cleavage of the ectodomain in the exosome-like vesicles or venom gland cells. In terms of tissue distribution, expressed by the venom gland.

The protein resides in the membrane. It carries out the reaction a ribonucleoside 5'-phosphate + H2O = a ribonucleoside + phosphate. Its function is as follows. Hydrolyzes nucleotides into nucleosides. Snake venom 5'-nucleotidases are widely distributed among venomous snake taxa, but there is a lack of information about their biological activities. They have been shown to inhibit platelet aggregation. This effect may be due to the liberation of inhibitory AMP or adenosine by its action on ADP released upon initiation of aggregation. Venom 5'-nucleotidases are also known to synergistically act in vivo with other toxins like ADPases, phospholipases, and disintegrins to exert a more pronounced anti-coagulant effect. The polypeptide is Snake venom 5'-nucleotidase (Gloydius blomhoffii blomhoffii (Japanese mamushi)).